The primary structure comprises 1515 residues: Glutamate synthase [NADPH] large chain (1515 aa).

A propeptide spanning residues 1 to 36 is cleaved from the precursor; that stretch reads MTTELNQGEQFVADFRANAAALTTANAYNPEDEHDA. C37 acts as the For GATase activity in catalysis. The Glutamine amidotransferase type-2 domain maps to 37-432; the sequence is CGVGFIAAID…PGEMIAVDLQ (396 aa). The interval 916 to 937 is disordered; sequence AKSDSGEGGEDPARFRPDKNGD. Residues 926 to 936 are compositionally biased toward basic and acidic residues; it reads DPARFRPDKNG. Residues 1085–1142 and 1086–1142 contribute to the FMN site; these read LSEV…IMVR and SEVH…IMVR. 3 residues coordinate [3Fe-4S] cluster: C1138, C1144, and C1149.

The protein belongs to the glutamate synthase family. As to quaternary structure, aggregate of 4 catalytic active heterodimers, consisting of a large and a small subunit. [3Fe-4S] cluster is required as a cofactor. The cofactor is FAD. FMN serves as cofactor.

The catalysed reaction is 2 L-glutamate + NADP(+) = L-glutamine + 2-oxoglutarate + NADPH + H(+). The protein operates within amino-acid biosynthesis; L-glutamate biosynthesis via GLT pathway; L-glutamate from 2-oxoglutarate and L-glutamine (NADP(+) route): step 1/1. It functions in the pathway energy metabolism; nitrogen metabolism. The polypeptide is Glutamate synthase [NADPH] large chain (gltB) (Azospirillum brasilense).